The chain runs to 270 residues: Hydroxyethylthiazole kinase (270 aa).

Met-47 is a substrate binding site. The ATP site is built by Arg-123 and Ser-170. Gly-197 is a binding site for substrate.

The protein belongs to the Thz kinase family. The cofactor is Mg(2+).

The enzyme catalyses 5-(2-hydroxyethyl)-4-methylthiazole + ATP = 4-methyl-5-(2-phosphooxyethyl)-thiazole + ADP + H(+). Its pathway is cofactor biosynthesis; thiamine diphosphate biosynthesis; 4-methyl-5-(2-phosphoethyl)-thiazole from 5-(2-hydroxyethyl)-4-methylthiazole: step 1/1. Functionally, catalyzes the phosphorylation of the hydroxyl group of 4-methyl-5-beta-hydroxyethylthiazole (THZ). The chain is Hydroxyethylthiazole kinase from Syntrophus aciditrophicus (strain SB).